The chain runs to 517 residues: Bifunctional purine biosynthesis protein PurH (517 aa).

The region spanning 1-146 (MKRLALLSTS…KNFAHLTVLC (146 aa)) is the MGS-like domain.

Belongs to the PurH family.

It catalyses the reaction (6R)-10-formyltetrahydrofolate + 5-amino-1-(5-phospho-beta-D-ribosyl)imidazole-4-carboxamide = 5-formamido-1-(5-phospho-D-ribosyl)imidazole-4-carboxamide + (6S)-5,6,7,8-tetrahydrofolate. The enzyme catalyses IMP + H2O = 5-formamido-1-(5-phospho-D-ribosyl)imidazole-4-carboxamide. Its pathway is purine metabolism; IMP biosynthesis via de novo pathway; 5-formamido-1-(5-phospho-D-ribosyl)imidazole-4-carboxamide from 5-amino-1-(5-phospho-D-ribosyl)imidazole-4-carboxamide (10-formyl THF route): step 1/1. It functions in the pathway purine metabolism; IMP biosynthesis via de novo pathway; IMP from 5-formamido-1-(5-phospho-D-ribosyl)imidazole-4-carboxamide: step 1/1. The polypeptide is Bifunctional purine biosynthesis protein PurH (Trichodesmium erythraeum (strain IMS101)).